We begin with the raw amino-acid sequence, 126 residues long: Fluoride-specific ion channel FluC (126 aa).

The next 3 membrane-spanning stretches (helical) occupy residues tryptophan 35–leucine 55, valine 71–phenylalanine 91, and leucine 101–isoleucine 121. The Na(+) site is built by glycine 75 and threonine 78.

This sequence belongs to the fluoride channel Fluc/FEX (TC 1.A.43) family.

Its subcellular location is the cell inner membrane. The catalysed reaction is fluoride(in) = fluoride(out). Its activity is regulated as follows. Na(+) is not transported, but it plays an essential structural role and its presence is essential for fluoride channel function. In terms of biological role, fluoride-specific ion channel. Important for reducing fluoride concentration in the cell, thus reducing its toxicity. The chain is Fluoride-specific ion channel FluC from Sphingopyxis alaskensis (strain DSM 13593 / LMG 18877 / RB2256) (Sphingomonas alaskensis).